The sequence spans 34 residues: MSDIN-like toxin proprotein 4 (34 aa).

Residues 1 to 10 constitute a propeptide that is removed on maturation; it reads MSDINTARLP. The cyclopeptide (Leu-Pro) cross-link spans 11-20; sequence LFLPPVRMPP. A propeptide spanning residues 21-34 is cleaved from the precursor; it reads CVGDDIEMVLTRGE.

Belongs to the MSDIN fungal toxin family. Post-translationally, processed by the macrocyclase-peptidase enzyme POPB to yield a toxic cyclic decapeptide. POPB first removes 10 residues from the N-terminus. Conformational trapping of the remaining peptide forces the enzyme to release this intermediate rather than proceed to macrocyclization. The enzyme rebinds the remaining peptide in a different conformation and catalyzes macrocyclization of the N-terminal 10 residues.

Functionally, probable toxin that belongs to the MSDIN-like toxin family responsible for a large number of food poisoning cases and deaths. The protein is MSDIN-like toxin proprotein 4 of Amanita bisporigera (Destroying angel).